The chain runs to 137 residues: Putative pre-16S rRNA nuclease (137 aa).

Belongs to the YqgF nuclease family.

It is found in the cytoplasm. Its function is as follows. Could be a nuclease involved in processing of the 5'-end of pre-16S rRNA. The sequence is that of Putative pre-16S rRNA nuclease from Clostridium botulinum (strain Alaska E43 / Type E3).